We begin with the raw amino-acid sequence, 147 residues long: Methylglyoxal synthase (147 aa).

One can recognise an MGS-like domain in the interval 4–147 (VSVPATKRIA…LLNFELLCES (144 aa)). Residues H17, K21, 43 to 46 (TGTT), and 63 to 64 (SG) contribute to the substrate site. D69 (proton donor/acceptor) is an active-site residue. H96 lines the substrate pocket.

It belongs to the methylglyoxal synthase family.

It carries out the reaction dihydroxyacetone phosphate = methylglyoxal + phosphate. Functionally, catalyzes the formation of methylglyoxal from dihydroxyacetone phosphate. This Leptospira borgpetersenii serovar Hardjo-bovis (strain JB197) protein is Methylglyoxal synthase.